Reading from the N-terminus, the 513-residue chain is Probable cytosol aminopeptidase (513 aa).

The Mn(2+) site is built by Lys-275 and Asp-280. The active site involves Lys-287. Residues Asp-298, Asp-357, and Glu-359 each coordinate Mn(2+). Residue Arg-361 is part of the active site.

It belongs to the peptidase M17 family. Mn(2+) serves as cofactor.

It is found in the cytoplasm. It carries out the reaction Release of an N-terminal amino acid, Xaa-|-Yaa-, in which Xaa is preferably Leu, but may be other amino acids including Pro although not Arg or Lys, and Yaa may be Pro. Amino acid amides and methyl esters are also readily hydrolyzed, but rates on arylamides are exceedingly low.. The enzyme catalyses Release of an N-terminal amino acid, preferentially leucine, but not glutamic or aspartic acids.. Presumably involved in the processing and regular turnover of intracellular proteins. Catalyzes the removal of unsubstituted N-terminal amino acids from various peptides. The sequence is that of Probable cytosol aminopeptidase from Streptomyces avermitilis (strain ATCC 31267 / DSM 46492 / JCM 5070 / NBRC 14893 / NCIMB 12804 / NRRL 8165 / MA-4680).